The following is a 709-amino-acid chain: MGCVNSKQTVSVTPAIDHSGVFRDNVCSGSGRIVVEDLPPVTETKLLSWWSKSGKKSSSKKSGSELGSDFGELSESGRASSNCRSESVSFRLGNLSKYLEAEQVAAGWPAWLSNVAGEAIHGWVPFRSDAFEKLEKIGQGTYSSVFRARETETGRIVALKKVRFDNFEPESVRFMAREILILRKLNHPNIIKLEGIVTSKLSCSIHLVFEYMEHDLTGLLSSPDIDFTTPQIKCYMKQLLSGLDHCHARGVMHRDIKGSNLLVNNEGILKVADFGLANFCNASGNKQPLTSRVVTLWYRPPELLLGATEYGASVDLWSVGCVFAELLIGKPVLQGRTEVEQLHKIFKLCGSPPEDYWKKSKLPHAMLFKPQQHYDGCLRETLKLKGLSDADINLIETLLSIQPHKRGTASTALVSQYFTSKPFACDPSSLPVYSPSKEIDAKHREDTTRKKISGNGRRGTESRKPTRKPPAFAKLAPAEDVRHHSQKFQKRNGHSVHNSIDSDSTLFEKMQKPSNHEKDEASHVKNASQGDVPFSGPLQVSVSSGFAWAKRRKDDICVRSHNRSLSRGHIPNLLGPSPAFSENTDVDSKNNEKEKEEKHGERTDSQDREAYEMLKLSMLKKWRQLERPDSFGGSDEYHSQELSLELYQREEKAAKLGHLGYEDNDEKIEFSGPLLSKSYGVDELLERHERQIRQLVRKSWFQKGKKQGK.

The N-myristoyl glycine moiety is linked to residue Gly-2. The segment at 53-80 (SGKKSSSKKSGSELGSDFGELSESGRAS) is disordered. One can recognise a Protein kinase domain in the interval 131–418 (FEKLEKIGQG…ASTALVSQYF (288 aa)). Residues 137–145 (IGQGTYSSV) and Lys-160 contribute to the ATP site. Asp-255 (proton acceptor) is an active-site residue. Disordered regions lie at residues 434–536 (SPSK…PFSG) and 566–609 (SRGH…QDRE). The segment covering 437–449 (KEIDAKHREDTTR) has biased composition (basic and acidic residues). The span at 484 to 494 (HSQKFQKRNGH) shows a compositional bias: basic residues. The span at 495 to 505 (SVHNSIDSDST) shows a compositional bias: polar residues. 2 stretches are compositionally biased toward basic and acidic residues: residues 509-523 (KMQKPSNHEKDEASH) and 586-609 (VDSKNNEKEKEEKHGERTDSQDRE).

Belongs to the protein kinase superfamily. Ser/Thr protein kinase family.

Its function is as follows. Required for beta-aminobutyric acid (BABA)-induced resistance (BABA-IR) against bacteria (e.g. P.syringae) and oomycetes (e.g. H.parasitica) via priming for salicylate (SA)-dependent defense responses such as pathogenesis-related PR-1 gene expression and trailing necrosis. Involved in BABA-mediated sterility. Necessary for the inheritance of BABA-priming to next generation, especially for the primed to be primed phenotype which consists in an enhanced second BABA-priming in transgenerationally primed plants. This is Protein IMPAIRED IN BABA-INDUCED STERILITY 1 from Arabidopsis thaliana (Mouse-ear cress).